Reading from the N-terminus, the 206-residue chain is Ribonuclease HII (206 aa).

In terms of domain architecture, RNase H type-2 spans 18 to 206; that stretch reads LRIAGVDEVG…PVHNILYQEK (189 aa). The a divalent metal cation site is built by aspartate 24, glutamate 25, and aspartate 115.

It belongs to the RNase HII family. Requires Mn(2+) as cofactor. It depends on Mg(2+) as a cofactor.

The protein localises to the cytoplasm. The enzyme catalyses Endonucleolytic cleavage to 5'-phosphomonoester.. Its function is as follows. Endonuclease that specifically degrades the RNA of RNA-DNA hybrids. The chain is Ribonuclease HII from Dinoroseobacter shibae (strain DSM 16493 / NCIMB 14021 / DFL 12).